Consider the following 537-residue polypeptide: Probable sterol O-acyltransferase 1 (537 aa).

Transmembrane regions (helical) follow at residues Phe98–Ala118, Phe140–Leu160, Leu174–Val194, and Phe199–Phe219. N-linked (GlcNAc...) asparagine glycosylation occurs at Asn250. A run of 2 helical transmembrane segments spans residues Phe344–Ala364 and Ile384–Leu404. Positions Phe418–Asn424 match the FYXDWWN motif motif. 2 consecutive transmembrane segments (helical) span residues Ala462–Thr482 and Val517–Phe537. His474 is a catalytic residue.

It belongs to the membrane-bound acyltransferase family. Sterol o-acyltransferase subfamily.

It is found in the endoplasmic reticulum membrane. In terms of biological role, sterol O-acyltransferase that catalyzes the formation of stery esters. In Schizosaccharomyces pombe (strain 972 / ATCC 24843) (Fission yeast), this protein is Probable sterol O-acyltransferase 1 (are1).